The following is a 146-amino-acid chain: ATP synthase epsilon chain (146 aa).

Over residues 92–116 the composition is skewed to basic and acidic residues; sequence ISVDQARRDRDSLRKKLNEHERSEQ. The disordered stretch occupies residues 92–120; sequence ISVDQARRDRDSLRKKLNEHERSEQDPEV.

This sequence belongs to the ATPase epsilon chain family. As to quaternary structure, F-type ATPases have 2 components, CF(1) - the catalytic core - and CF(0) - the membrane proton channel. CF(1) has five subunits: alpha(3), beta(3), gamma(1), delta(1), epsilon(1). CF(0) has three main subunits: a, b and c.

The protein localises to the cell membrane. Functionally, produces ATP from ADP in the presence of a proton gradient across the membrane. The polypeptide is ATP synthase epsilon chain (Cutibacterium acnes (strain DSM 16379 / KPA171202) (Propionibacterium acnes)).